Here is a 130-residue protein sequence, read N- to C-terminus: Protein ApaG (130 aa).

Residues 3 to 127 enclose the ApaG domain; sequence RALTRDIEVT…FSLDSPGLVR (125 aa).

This Sinorhizobium fredii (strain NBRC 101917 / NGR234) protein is Protein ApaG.